The chain runs to 76 residues: Small ribosomal subunit protein bS18 (76 aa).

It belongs to the bacterial ribosomal protein bS18 family. Part of the 30S ribosomal subunit. Forms a tight heterodimer with protein bS6.

Its function is as follows. Binds as a heterodimer with protein bS6 to the central domain of the 16S rRNA, where it helps stabilize the platform of the 30S subunit. The protein is Small ribosomal subunit protein bS18 of Aeromonas hydrophila subsp. hydrophila (strain ATCC 7966 / DSM 30187 / BCRC 13018 / CCUG 14551 / JCM 1027 / KCTC 2358 / NCIMB 9240 / NCTC 8049).